The following is a 368-amino-acid chain: MAALSTARRVVIKIGSALLVDRTSSALRQEWLLSLAEDVARLKKQGKDVILVSSGSIALGRGALGLPRKDLPLEQSQAAAAVGQIRLARAYEEALAPHGITTAQVLVTLEDSENRRRYLNSRATLETLIGLGAVPIVNENDTIATDEIRYGDNDRLAAQVAVTVGADVLILLSDVDGFYSANPALDPDAKRFDRIEQITPEIEAMAGDGVSGLSKGGMITKLLAAKMATAAGCAMAISEGSVMSPVSALEAGAASTWFTAQGDPQVARKRWIAAMKTRGVITVDEGAAKALHNGNSLLPAGVRHVEGDFGRGDPLAILGPDGRKLGQGLSRYTAEEARALQGHRSDEIEAILGYAGRAALIHRDDMAL.

Residue Lys13 coordinates ATP. Positions 54, 141, and 153 each coordinate substrate. 173–174 serves as a coordination point for ATP; that stretch reads SD. One can recognise a PUA domain in the interval 278–355; that stretch reads RGVITVDEGA…DEIEAILGYA (78 aa).

Belongs to the glutamate 5-kinase family.

It localises to the cytoplasm. It carries out the reaction L-glutamate + ATP = L-glutamyl 5-phosphate + ADP. It functions in the pathway amino-acid biosynthesis; L-proline biosynthesis; L-glutamate 5-semialdehyde from L-glutamate: step 1/2. Catalyzes the transfer of a phosphate group to glutamate to form L-glutamate 5-phosphate. The protein is Glutamate 5-kinase of Ruegeria sp. (strain TM1040) (Silicibacter sp.).